Consider the following 276-residue polypeptide: 4-deoxy-L-threo-5-hexosulose-uronate ketol-isomerase (276 aa).

The Zn(2+) site is built by histidine 194, histidine 196, glutamate 201, and histidine 243.

This sequence belongs to the KduI family. Zn(2+) serves as cofactor.

It catalyses the reaction 5-dehydro-4-deoxy-D-glucuronate = 3-deoxy-D-glycero-2,5-hexodiulosonate. It participates in glycan metabolism; pectin degradation; 2-dehydro-3-deoxy-D-gluconate from pectin: step 4/5. Catalyzes the isomerization of 5-dehydro-4-deoxy-D-glucuronate to 3-deoxy-D-glycero-2,5-hexodiulosonate. This Lachnoclostridium phytofermentans (strain ATCC 700394 / DSM 18823 / ISDg) (Clostridium phytofermentans) protein is 4-deoxy-L-threo-5-hexosulose-uronate ketol-isomerase.